We begin with the raw amino-acid sequence, 485 residues long: NADH-quinone oxidoreductase subunit N (485 aa).

The next 14 helical transmembrane spans lie at 8-28, 35-55, 71-91, 105-125, 127-147, 159-179, 203-223, 235-255, 271-291, 297-317, 326-346, 373-393, 408-430, and 455-475; these read LIALLPLLIVGLTVVVVMLSI, FLNATLSVIGLNAALVSLWFV, GFAMLYTGLVLLASLATCTFA, FYLLVLIASLGGILLANANHL, ALFLGIELISLPLFGLIGYAF, YTILSAAASSFLLFGMALVYA, LLAGFGLMIVGLGFKLSLVPF, PAPVSTFLATASKIAIFGVVM, VVLGIIAFASIIFGNLMALSQ, LLGYSSISHLGYLLVALIALQ, VGVYLAGYLFSSLGAFGVVSL, AAVMTVMMLSLAGIPMTLGFI, WWLVAAVVVGSAIGLYYYLRVAV, and IVVLISALLVLVLGVWPQPLI.

This sequence belongs to the complex I subunit 2 family. As to quaternary structure, NDH-1 is composed of 13 different subunits. Subunits NuoA, H, J, K, L, M, N constitute the membrane sector of the complex.

The protein resides in the cell inner membrane. It carries out the reaction a quinone + NADH + 5 H(+)(in) = a quinol + NAD(+) + 4 H(+)(out). Its function is as follows. NDH-1 shuttles electrons from NADH, via FMN and iron-sulfur (Fe-S) centers, to quinones in the respiratory chain. The immediate electron acceptor for the enzyme in this species is believed to be ubiquinone. Couples the redox reaction to proton translocation (for every two electrons transferred, four hydrogen ions are translocated across the cytoplasmic membrane), and thus conserves the redox energy in a proton gradient. This chain is NADH-quinone oxidoreductase subunit N, found in Salmonella arizonae (strain ATCC BAA-731 / CDC346-86 / RSK2980).